We begin with the raw amino-acid sequence, 629 residues long: MNRYTTIKQLGDGTYGSVLLGRSIESGELIAIKKMKRKFYSWEECMNLREVKSLKKLNHANIVKLKEVIRENDHLYFIFEYMKENLYQLIKERNKLFPESAIRNIMYQILQGLAFIHKHGFFHRDLKPENLLCMGPELVKIADFGLAREIRSRPPYTDYVSTRWYRAPEVLLRSTNYSSPIDIWAVGCIMAEVYTLRPLFPGASEIDTIFKICQVLGTPKKTDWPEGYQLSSAMNFLWPQCIPNNLKTLIPNASSEAIQLLRDLLQWDPKKRPTASQALRYPYFQIGHPLGIISKDSGKPQREVQDKTGPPPYIKPAPPAQAPAKAYTLISSRPSQASQPPQHSVHPYKGDVSRTEQLSHVQEGKPSPPFFPSLHNKNLQPKILASLEQKNGEIKPKSRRRWGLISRSTKGSDDWADLDDLDFSPSLTRIDVKNKKRQSDDTLCRFESVLDLKPSESVGTGTTVSTQASSQRRDTPTLQSSAKQHYLKHSRYLPGINIRNGVLPNPGKDFLPSNSWSSSGLSGKSSGTVSVVSKITSVGSGSASSSGLTGSYIPSFLKKEIGSVMQRVQLAPLAAPPPGYSSLKAVRPHPGRPFFHTQPRSTPGLIPRPPAAQPVHGRIDWSSKYPSRR.

A Protein kinase domain is found at tyrosine 4 to phenylalanine 284. Residues leucine 10–valine 18 and lysine 33 contribute to the ATP site. Aspartate 125 serves as the catalytic Proton acceptor. Position 157 is a phosphothreonine; by CDK7 (threonine 157). Position 159 is a phosphotyrosine (tyrosine 159). Phosphoserine is present on serine 161. Disordered stretches follow at residues isoleucine 292–asparagine 376, serine 455–lysine 483, and serine 581–arginine 629. The segment covering aspartate 296–aspartate 306 has biased composition (basic and acidic residues). Over residues glycine 309–glutamine 321 the composition is skewed to pro residues. Low complexity-rich tracts occupy residues alanine 322 to serine 344 and serine 457 to serine 470.

The protein belongs to the protein kinase superfamily. CMGC Ser/Thr protein kinase family. CDC2/CDKX subfamily. The cofactor is Mg(2+). Post-translationally, autophosphorylated on serine and threonine residues. Phosphorylation at Thr-157 by CDK7/Cak1p increases kinase activity. As to expression, highly expressed in colon and lung, lower levels present in heart, esophagus, stomach, small intestine and ovary. Localizes to the crypt region of large and small intestine.

Its subcellular location is the cytoplasm. The protein localises to the cytosol. It is found in the cell projection. The protein resides in the cilium. It localises to the nucleus. Its subcellular location is the cytoskeleton. The protein localises to the cilium basal body. The enzyme catalyses L-seryl-[protein] + ATP = O-phospho-L-seryl-[protein] + ADP + H(+). The catalysed reaction is L-threonyl-[protein] + ATP = O-phospho-L-threonyl-[protein] + ADP + H(+). Functionally, has an essential role in ciliogenesis, particularly in neuronal and retinal progenitor cells. Phosphorylates KIF3A. Involved in the control of ciliary length. Regulates the ciliary localization of SHH pathway components as well as the localization of IFT components at ciliary tips. May play a role in cardiac development. Regulates intraflagellar transport (IFT) speed and negatively regulates cilium length in a cAMP and mTORC1 signaling -dependent manner and this regulation requires its kinase activity. The sequence is that of Serine/threonine-protein kinase ICK (Cilk1) from Mus musculus (Mouse).